Here is a 198-residue protein sequence, read N- to C-terminus: dTTP/UTP pyrophosphatase (198 aa).

The Proton acceptor role is filled by D75.

This sequence belongs to the Maf family. YhdE subfamily. Requires a divalent metal cation as cofactor.

It localises to the cytoplasm. It catalyses the reaction dTTP + H2O = dTMP + diphosphate + H(+). The enzyme catalyses UTP + H2O = UMP + diphosphate + H(+). Its function is as follows. Nucleoside triphosphate pyrophosphatase that hydrolyzes dTTP and UTP. May have a dual role in cell division arrest and in preventing the incorporation of modified nucleotides into cellular nucleic acids. This chain is dTTP/UTP pyrophosphatase, found in Wolbachia pipientis wMel.